Reading from the N-terminus, the 614-residue chain is UvrABC system protein C (614 aa).

The GIY-YIG domain occupies 25 to 103 (SVPGVYKMFG…IKSLKPKYNI (79 aa)). Positions 214–249 (KEIQCELFEMMCRFSNNQDYESAIVCRDRLHALKSM) constitute a UVR domain.

It belongs to the UvrC family. Interacts with UvrB in an incision complex.

Its subcellular location is the cytoplasm. In terms of biological role, the UvrABC repair system catalyzes the recognition and processing of DNA lesions. UvrC both incises the 5' and 3' sides of the lesion. The N-terminal half is responsible for the 3' incision and the C-terminal half is responsible for the 5' incision. In Anaplasma phagocytophilum (strain HZ), this protein is UvrABC system protein C.